Reading from the N-terminus, the 125-residue chain is Immunoglobulin heavy variable 4-39 (125 aa).

The N-terminal stretch at 1 to 26 is a signal peptide; it reads MDLMCKKMKHLWFFLLLVAAPRWVLS. Residues 27 to 51 are framework-1; sequence QLQLQESGPGLVKPSETLSLTCTVS. One can recognise an Ig-like domain in the interval 27-125; it reads QLQLQESGPG…ADTAVYYCAR (99 aa). A disulfide bridge connects residues C48 and C123. The interval 52–61 is complementarity-determining-1; it reads GGSISSSSYY. Residues 62–78 form a framework-2 region; sequence WGWIRQPPGKGLEWIGS. Residues 79–85 are complementarity-determining-2; it reads IYYSGST. Residues 86–123 are framework-3; that stretch reads YYNPSLKSRVTISVDTSKNQFSLKLSSVTAADTAVYYC. The complementarity-determining-3 stretch occupies residues 124-125; that stretch reads AR.

As to quaternary structure, immunoglobulins are composed of two identical heavy chains and two identical light chains; disulfide-linked.

It is found in the secreted. It localises to the cell membrane. Functionally, v region of the variable domain of immunoglobulin heavy chains that participates in the antigen recognition. Immunoglobulins, also known as antibodies, are membrane-bound or secreted glycoproteins produced by B lymphocytes. In the recognition phase of humoral immunity, the membrane-bound immunoglobulins serve as receptors which, upon binding of a specific antigen, trigger the clonal expansion and differentiation of B lymphocytes into immunoglobulins-secreting plasma cells. Secreted immunoglobulins mediate the effector phase of humoral immunity, which results in the elimination of bound antigens. The antigen binding site is formed by the variable domain of one heavy chain, together with that of its associated light chain. Thus, each immunoglobulin has two antigen binding sites with remarkable affinity for a particular antigen. The variable domains are assembled by a process called V-(D)-J rearrangement and can then be subjected to somatic hypermutations which, after exposure to antigen and selection, allow affinity maturation for a particular antigen. The polypeptide is Immunoglobulin heavy variable 4-39 (Homo sapiens (Human)).